The primary structure comprises 841 residues: Serine/threonine-protein kinase/endoribonuclease IRE1a (841 aa).

A signal peptide spans 1–30; the sequence is MPPRCPFLRHLFFLLLLLSPWIMSPCGGAA. The Lumenal segment spans residues 31–323; it reads DDVTYPIVPS…KQKYTYLFGQ (293 aa). N-linked (GlcNAc...) asparagine glycosylation is found at asparagine 100, asparagine 104, asparagine 119, asparagine 132, and asparagine 221. A helical membrane pass occupies residues 324 to 344; sequence WSPVKLLAPLVLLGVVVSVFI. The Cytoplasmic portion of the chain corresponds to 345-841; sequence KKFSSRGSDV…FRKYFKCDII (497 aa). A disordered region spans residues 352-382; the sequence is SDVSLKAGPSKKKKNRKSAKDTNRQSVPRGQ. In terms of domain architecture, Protein kinase spans 414-704; the sequence is FLSSKEIAKG…ATEVLLHPMF (291 aa). Residues 420–428 and lysine 442 contribute to the ATP site; that span reads IAKGSNGTV. Aspartate 570 functions as the Proton acceptor in the catalytic mechanism. Residues 707–838 form the KEN domain; the sequence is SEMRLSFLRD…EEVFRKYFKC (132 aa).

The protein belongs to the protein kinase superfamily. Ser/Thr protein kinase family. Homodimer; disulfide-linked. Dimer formation is driven by hydrophobic interactions within the N-terminal luminal domains and stabilized by disulfide bridges. The cofactor is Mg(2+). Post-translationally, autophosphorylated. As to expression, ubiquitous. Detected in the vascular bundles of young plants, leaves, roots, seedlings and in the receptacles of flowers and vascular bundles of the petals.

It localises to the endoplasmic reticulum membrane. The catalysed reaction is L-seryl-[protein] + ATP = O-phospho-L-seryl-[protein] + ADP + H(+). It carries out the reaction L-threonyl-[protein] + ATP = O-phospho-L-threonyl-[protein] + ADP + H(+). With respect to regulation, the kinase domain is activated by trans-autophosphorylation. Kinase activity is required for activation of the endoribonuclease domain. Its function is as follows. Senses unfolded proteins in the lumen of the endoplasmic reticulum via its N-terminal domain which leads to enzyme auto-activation. The active endoribonuclease domain splices bZIP60 mRNA to generate a new C-terminus, converting it into a potent unfolded-protein response transcriptional activator which then induces transcription of UPR target genes. Involved in organ growth regulation. Plays a role in plant immunity and abiotic stress responses. The protein is Serine/threonine-protein kinase/endoribonuclease IRE1a (IRE1A) of Arabidopsis thaliana (Mouse-ear cress).